We begin with the raw amino-acid sequence, 1881 residues long: Genome polyprotein (1881 aa).

Polar residues predominate over residues 1–16 (MAQTLSKISNKENASS). A disordered region spans residues 1-93 (MAQTLSKISN…SHLKPASTDV (93 aa)). Basic and acidic residues predominate over residues 37-50 (EPLDHDSRRGRDPV). Residues 564-720 (DKVISCCTRR…DKWKSDNPGK (157 aa)) form the SF3 helicase domain. Residue 590–597 (GPPGCGKT) coordinates ATP. An O-(5'-phospho-RNA)-tyrosine modification is found at Tyr1093. Positions 1188–1341 (GVTHKNAIVS…KLIVPYVKVD (154 aa)) constitute a Peptidase C24 domain. Active-site for 3CLpro activity residues include His1222, Glu1243, and Cys1305. A RdRp catalytic domain is found at 1593–1718 (HDRYCVDYSK…IVPPLISSVM (126 aa)).

Homodimer. Interacts with NTPase, protein p30 and protease-polymerase p76. In terms of assembly, interacts with capsid protein VP1 and protease-polymerase p76. Interacts with host IEF4e; this interaction plays a role in translation of viral proteins. As to quaternary structure, homooligomer. Interacts with Vpg, protein p32 and may interact with capsid protein VP1. Post-translationally, specific enzymatic cleavages in vivo yield mature proteins. Pro-Pol is first autocatalytically cleaved, then processes the whole polyprotein. In terms of processing, VPg is uridylylated by the polymerase and is covalently attached to the 5'-end of the polyadenylated genomic and subgenomic RNAs. This uridylylated form acts as a nucleotide-peptide primer for the polymerase.

The protein resides in the host endoplasmic reticulum membrane. It carries out the reaction a ribonucleoside 5'-triphosphate + H2O = a ribonucleoside 5'-diphosphate + phosphate + H(+). The catalysed reaction is RNA(n) + a ribonucleoside 5'-triphosphate = RNA(n+1) + diphosphate. The enzyme catalyses Endopeptidase with a preference for cleavage when the P1 position is occupied by Glu-|-Xaa and the P1' position is occupied by Gly-|-Yaa.. Its function is as follows. Together with NTPase and NS4, initiates the formation of the replication complex. Induces the proliferation of the host smooth ER membranes forming long tubular structures. These remodeled membranes probably form the viral factories that contain the replication complex. Functionally, displays NTPase activity, but no helicase activity. Induces the formation of convoluted membranes derived from the host ER. These remodeled membranes probably form the viral factories that contain the replication complex. Together with NS2 and NS4, initiates the formation of the replication complex. Probable key protein responsible for the formation of membrane alterations by the virus. Induces the formation of convoluted membranes derived from the host ER. These remodeled membranes probably form the viral factories that contain the replication complex. Together with NS2 and NTPase, initiates the formation of the replication complex. In terms of biological role, viral genome-linked protein is covalently linked to the 5'-end of the positive-strand, negative-strand genomic RNAs and subgenomic RNA. Acts as a genome-linked replication primer. May recruit ribosome to viral RNA thereby promoting viral proteins translation. Interacts with host translation initiation complex to allow the translation of viral proteins. Its function is as follows. Protease-polymerase p76 processes the polyprotein: Pro-Pol is first released by autocleavage, then all other proteins are cleaved. Cleaves host translation initiation factor eIF4G1, eIF4G2 and PABP1 thereby inducing a shutdown of host protein synthesis. This shutdown may not prevent viral mRNA from being translated since viral Vpg replaces the cap. Also functions as an RNA-directed RNA polymerase, which replicates genomic and antigenomic viral RNA by recognizing specific signals. Also transcribes a subgenomic mRNA by initiating RNA synthesis internally on antigenomic RNA. This sgRNA codes for structural proteins. Catalyzes the covalent attachment VPg with viral RNAs. The polypeptide is Genome polyprotein (Vesicular exanthema of swine virus serotype A48 (isolate Swine/United States/A48/1948) (VESV)).